We begin with the raw amino-acid sequence, 111 residues long: Phosphoribosyl-ATP pyrophosphatase (111 aa).

Belongs to the PRA-PH family.

The protein resides in the cytoplasm. It carries out the reaction 1-(5-phospho-beta-D-ribosyl)-ATP + H2O = 1-(5-phospho-beta-D-ribosyl)-5'-AMP + diphosphate + H(+). The protein operates within amino-acid biosynthesis; L-histidine biosynthesis; L-histidine from 5-phospho-alpha-D-ribose 1-diphosphate: step 2/9. The polypeptide is Phosphoribosyl-ATP pyrophosphatase (Pseudomonas putida (strain ATCC 700007 / DSM 6899 / JCM 31910 / BCRC 17059 / LMG 24140 / F1)).